The following is a 545-amino-acid chain: B3 domain-containing protein Os03g0620500 (545 aa).

The TF-B3 1 DNA-binding region spans 26–119 (MKCFHRQMSA…RRASGVQERN (94 aa)). Residues 111-188 (RASGVQERNA…SSSEHESSYD (78 aa)) are disordered. A compositionally biased stretch (basic and acidic residues) spans 173 to 186 (EEAKESSSSEHESS). The TF-B3 2 DNA-binding region spans 231–331 (VTTMKHSNVN…RATVHLLRET (101 aa)). Positions 368-400 (RRGTMEPSTTNVKKEADNEQCNNGQGKRQEPLN) are disordered. Residues 441–542 (YVSIMNKSNV…AMKVHIIRHN (102 aa)) constitute a DNA-binding region (TF-B3 3).

The protein resides in the nucleus. This is B3 domain-containing protein Os03g0620500 from Oryza sativa subsp. japonica (Rice).